Consider the following 215-residue polypeptide: Tricarboxylate transporter ALT9 (215 aa).

2 Solcar repeats span residues Thr-18–Met-106 and Cys-111–Leu-197. 3 helical membrane passes run Thr-19–Leu-39, Gly-112–Met-132, and Val-182–Val-202.

It belongs to the mitochondrial carrier (TC 2.A.29) family.

Its subcellular location is the mitochondrion inner membrane. The protein operates within mycotoxin biosynthesis. Functionally, tricarboxylate transporter; part of the gene cluster that mediates the biosynthesis of the host-selective toxins (HSTs) AAL-toxins, sphinganine-analog mycotoxins responsible for Alternaria stem canker on tomato by the tomato pathotype. The biosynthesis starts with the polyketide synthase ALT1-catalyzed C-16 carbon chain assembly from one starter acetyl-CoA unit with malonyl-CoA extender units. ALT1 also selectively transfers methyl groups at the first and the third cycle of chain elongation for AAL toxin. The C-16 polyketide chain is released from the enzyme by a nucleophilic attack of a carbanion, which is derived from R-carbon of glycin by decarboxylation, on the carbonyl carbon of polyketide acyl chain. This step is probably catalyzed by a pyridoxal 5'-phosphate-dependent aminoacyl transferase ALT4. The respective functions of the other enzymes encoded by the cluster have still to be elucidated. The sphingosine N-acyltransferase-like protein ALT7 seems not to act as a resistance/self-tolerance factor against the toxin in the toxin biosynthetic gene cluster, contrary to what is expected. In Alternaria alternata (Alternaria rot fungus), this protein is Tricarboxylate transporter ALT9.